The chain runs to 422 residues: Histidine--tRNA ligase (422 aa).

Belongs to the class-II aminoacyl-tRNA synthetase family. Homodimer.

It localises to the cytoplasm. It carries out the reaction tRNA(His) + L-histidine + ATP = L-histidyl-tRNA(His) + AMP + diphosphate + H(+). In Prosthecochloris aestuarii (strain DSM 271 / SK 413), this protein is Histidine--tRNA ligase.